The chain runs to 1216 residues: Apical endosomal glycoprotein (1216 aa).

A signal peptide spans 1–22 (MPLSSHLLPALVLFLAGSSGWA). Residues 23–1151 (WVPNHCRSPG…SPGNTAAPGS (1129 aa)) lie on the Extracellular side of the membrane. The 28-residue stretch at 26-53 (NHCRSPGQAVCNFVCDCRDCSDEAQCGY) folds into the LDL-receptor class A 1; truncated domain. Positions 64 to 222 (FACDFEQDPC…DDLEFWDCGL (159 aa)) constitute an MAM 1 domain. An N-linked (GlcNAc...) asparagine glycan is attached at Asn-203. One can recognise an LDL-receptor class A 2 domain in the interval 228 to 266 (NCPPGHHHCQNKVCVEPQQLCDGEDNCGDLSDENPLTCG). 3 disulfides stabilise this stretch: Cys-229–Cys-241, Cys-236–Cys-254, and Cys-248–Cys-265. Residues 269-425 (IATDFETGLG…DLILSDHCRP (157 aa)) enclose the MAM 2 domain. The interval 280-307 (WNRSEGWSRNHRAGGPERPSWPRRDHSR) is disordered. Asn-281 and Asn-339 each carry an N-linked (GlcNAc...) asparagine glycan. The segment at 429-455 (VSTLQPLPPGPRAPAPQPLPPSSRLQD) is disordered. The segment covering 434-449 (PLPPGPRAPAPQPLPP) has biased composition (pro residues). Positions 456–491 (SCKQGHLACGDLCVPPEQLCDFEEQCAGGEDEQACG) constitute an LDL-receptor class A 3 domain. 3 cysteine pairs are disulfide-bonded: Cys-457–Cys-468, Cys-464–Cys-481, and Cys-475–Cys-490. 4 MAM domains span residues 491-644 (GTTD…DCSP), 654-809 (VSCN…PCWA), 811-969 (NYCS…PCPQ), and 971-1138 (GSCD…HCQQ). Residues Asn-583 and Asn-636 are each glycosylated (N-linked (GlcNAc...) asparagine). A glycan (N-linked (GlcNAc...) asparagine) is linked at Asn-835. A helical membrane pass occupies residues 1152 to 1172 (VPAVVGSALLLLMLLVLLGLG). Residues 1173-1216 (GRRWLQKKGSCPFQSNTEATAPGFDNILFNADGVTLPASVTSDP) lie on the Cytoplasmic side of the membrane.

The protein localises to the membrane. Functionally, probably involved in the sorting and selective transport of receptors and ligands across polarized epithelia. This Homo sapiens (Human) protein is Apical endosomal glycoprotein.